Reading from the N-terminus, the 406-residue chain is NAC transcription factor NAM-B1 (406 aa).

The segment covering 1–11 (MGSPDSSSGSA) has biased composition (polar residues). Positions 1–40 (MGSPDSSSGSAQKPPRHQHQHQPPPPRRQGSAPELPPGFR) are disordered. The region spanning 35–204 (LPPGFRFHPT…DWVLCRIYKK (170 aa)) is the NAC domain. The DNA-binding element occupies 137 to 210 (VGVKKALVFY…IYKKTSKAAA (74 aa)).

It localises to the nucleus. Transcription factor of the NAC family associated with the grain protein content (GPC). Sequences of the 11 European varieties of H.vulgare tested belongs to the same haplotype while the sequence found in H.spontaneum, an ancestor of the cultivated H.vulgare which has a higher GPC, belongs to an other haplotype. The chain is NAC transcription factor NAM-B1 (NAM-B1) from Hordeum vulgare subsp. spontaneum (Wild barley).